The following is a 302-amino-acid chain: Sulfate adenylyltransferase subunit 2 (302 aa).

The disordered stretch occupies residues 279 to 302 (ERQGRAIDHDQSGSMELKKRQGYF). Positions 280-302 (RQGRAIDHDQSGSMELKKRQGYF) are enriched in basic and acidic residues.

This sequence belongs to the PAPS reductase family. CysD subfamily. As to quaternary structure, heterodimer composed of CysD, the smaller subunit, and CysN.

The catalysed reaction is sulfate + ATP + H(+) = adenosine 5'-phosphosulfate + diphosphate. It functions in the pathway sulfur metabolism; hydrogen sulfide biosynthesis; sulfite from sulfate: step 1/3. Functionally, with CysN forms the ATP sulfurylase (ATPS) that catalyzes the adenylation of sulfate producing adenosine 5'-phosphosulfate (APS) and diphosphate, the first enzymatic step in sulfur assimilation pathway. APS synthesis involves the formation of a high-energy phosphoric-sulfuric acid anhydride bond driven by GTP hydrolysis by CysN coupled to ATP hydrolysis by CysD. This Photobacterium profundum (strain SS9) protein is Sulfate adenylyltransferase subunit 2.